The primary structure comprises 110 residues: Tumor suppressor candidate 2 (110 aa).

A lipid anchor (N-myristoyl glycine) is attached at G2. Residue S50 is modified to Phosphoserine.

It belongs to the TUSC2 family. Myristoylation is required for tumor suppressor activity. As to expression, strong expression in heart, lung, skeletal muscle, kidney, and pancreas, followed by brain and liver, lowest levels in placenta.

Functionally, may function as a tumor suppressor, inhibiting colony formation, causing G1 arrest and ultimately inducing apoptosis in homozygous 3p21.3 120-kb region-deficient cells. The sequence is that of Tumor suppressor candidate 2 (TUSC2) from Homo sapiens (Human).